A 256-amino-acid polypeptide reads, in one-letter code: Methylesterase 9 (256 aa).

Ser78 (acyl-ester intermediate) is an active-site residue. Active-site charge relay system residues include Asp206 and His234.

This sequence belongs to the AB hydrolase superfamily. Methylesterase family.

It carries out the reaction methyl (indol-3-yl)acetate + H2O = (indol-3-yl)acetate + methanol + H(+). The enzyme catalyses methyl (-)-jasmonate + H2O = jasmonate + methanol + H(+). It catalyses the reaction methyl salicylate + H2O = salicylate + methanol + H(+). It participates in plant hormone biosynthesis. The protein operates within lipid metabolism; oxylipin biosynthesis. With respect to regulation, esterase activity is down-regulated by salicylic acid (SA). Its function is as follows. Methylesterase shown to have carboxylesterase activity, methyl indole-3-acetic acid (MeIAA) esterase activity, methyl salicylate (MeSA) esterase activity and methyl jasmonate (MeJA) esterase activity in vitro. Required to convert methyl salicylate (MeSA) to salicylic acid (SA) as part of the signal transduction pathways that activate systemic acquired resistance in systemic tissue. MeSA is believed to be an inactive form that needs to be demethylated to exert a biological effect. The chain is Methylesterase 9 from Arabidopsis thaliana (Mouse-ear cress).